The following is a 439-amino-acid chain: Cobyrinate a,c-diamide synthase (439 aa).

One can recognise a GATase cobBQ-type domain in the interval 238-431; that stretch reads KIAVAYDKAF…AHVNFLGNIE (194 aa). Cysteine 320 (nucleophile) is an active-site residue.

This sequence belongs to the CobB/CbiA family. The cofactor is Mg(2+).

The enzyme catalyses cob(II)yrinate + 2 L-glutamine + 2 ATP + 2 H2O = cob(II)yrinate a,c diamide + 2 L-glutamate + 2 ADP + 2 phosphate + 2 H(+). The protein operates within cofactor biosynthesis; adenosylcobalamin biosynthesis; cob(II)yrinate a,c-diamide from sirohydrochlorin (anaerobic route): step 10/10. Its function is as follows. Catalyzes the ATP-dependent amidation of the two carboxylate groups at positions a and c of cobyrinate, using either L-glutamine or ammonia as the nitrogen source. The polypeptide is Cobyrinate a,c-diamide synthase (Clostridium tetani (strain Massachusetts / E88)).